The primary structure comprises 375 residues: CMP-N-acetylneuraminate-beta-1,4-galactoside alpha-2,3-sialyltransferase (375 aa).

Topologically, residues 1 to 8 are cytoplasmic; it reads MGLLVFVR. The chain crosses the membrane as a helical; Signal-anchor for type II membrane protein span at residues 9 to 28; that stretch reads NLLLALCLFLVLGFLYYSAW. Residues 29-375 lie on the Lumenal side of the membrane; the sequence is KLHLLQWEED…RVITDLSSGI (347 aa). 2 N-linked (GlcNAc...) asparagine glycosylation sites follow: Asn-80 and Asn-171. The cysteines at positions 160 and 314 are disulfide-linked.

This sequence belongs to the glycosyltransferase 29 family. The soluble form derives from the membrane form by proteolytic processing. In terms of tissue distribution, highly expressed in adult skeletal muscle and in all fetal tissues examined and to a much lesser extent in placenta, lung and liver.

The protein localises to the golgi apparatus. Its subcellular location is the golgi stack membrane. The protein resides in the secreted. It carries out the reaction a beta-D-galactosyl-(1-&gt;4)-N-acetyl-beta-D-glucosaminyl derivative + CMP-N-acetyl-beta-neuraminate = an N-acetyl-alpha-neuraminyl-(2-&gt;3)-beta-D-galactosyl-(1-&gt;4)-N-acetyl-beta-D-glucosaminyl derivative + CMP + H(+). It participates in protein modification; protein glycosylation. In terms of biological role, catalyzes the formation of the NeuAc-alpha-2,3-Gal-beta-1,4-GlcNAc-, NeuAc-alpha-2,3-Gal-beta-1,3-GlcNAc- and NeuAc-alpha-2,3-Gal-beta-1,3-GalNAc- sequences found in terminal carbohydrate groups of glycoproteins and glycolipids. The highest activity is toward Gal-beta-1,3-GlcNAc and the lowest toward Gal-beta-1,3-GalNAc. The chain is CMP-N-acetylneuraminate-beta-1,4-galactoside alpha-2,3-sialyltransferase (ST3GAL3) from Homo sapiens (Human).